The chain runs to 407 residues: Fructose-1,6-bisphosphatase, chloroplastic (407 aa).

The transit peptide at 1–50 directs the protein to the chloroplast; that stretch reads MAAATASSQLIFSKPYSPSRLCPFQLCVFDAKSVLSSSRRKHVNGSGVRC. The Mg(2+) site is built by glutamate 126, glutamate 155, aspartate 176, leucine 178, and aspartate 179. Residue 179–182 coordinates substrate; it reads DGSS. The cysteines at positions 203 and 223 are disulfide-linked. Substrate is bound by residues asparagine 287, tyrosine 319, tyrosine 337, tyrosine 339, and lysine 349. Glutamate 355 is a binding site for Mg(2+).

Belongs to the FBPase class 1 family. In terms of assembly, homotetramer. The cofactor is Mg(2+).

Its subcellular location is the plastid. The protein resides in the chloroplast stroma. The enzyme catalyses beta-D-fructose 1,6-bisphosphate + H2O = beta-D-fructose 6-phosphate + phosphate. Its pathway is carbohydrate biosynthesis; Calvin cycle. The polypeptide is Fructose-1,6-bisphosphatase, chloroplastic (FBP) (Pisum sativum (Garden pea)).